The sequence spans 131 residues: Small ribosomal subunit protein uS8 (131 aa).

It belongs to the universal ribosomal protein uS8 family. As to quaternary structure, part of the 30S ribosomal subunit. Contacts proteins S5 and S12.

In terms of biological role, one of the primary rRNA binding proteins, it binds directly to 16S rRNA central domain where it helps coordinate assembly of the platform of the 30S subunit. The protein is Small ribosomal subunit protein uS8 of Nautilia profundicola (strain ATCC BAA-1463 / DSM 18972 / AmH).